The sequence spans 67 residues: UPF0434 protein Lcho_2556 (67 aa).

This sequence belongs to the UPF0434 family.

The chain is UPF0434 protein Lcho_2556 from Leptothrix cholodnii (strain ATCC 51168 / LMG 8142 / SP-6) (Leptothrix discophora (strain SP-6)).